The primary structure comprises 176 residues: Cytochrome b (176 aa).

A run of 3 helical transmembrane segments spans residues 33-53 (FGSLLGICLVLQISTGLFLAM), 77-98 (WVLRYLHANGASMFFICLYLHV), and 113-133 (WNVGVILLFATMATAFMGYVL). His-83 and His-97 together coordinate heme b.

Belongs to the cytochrome b family. As to quaternary structure, the cytochrome bc1 complex contains 11 subunits: 3 respiratory subunits (MT-CYB, CYC1 and UQCRFS1), 2 core proteins (UQCRC1 and UQCRC2) and 6 low-molecular weight proteins (UQCRH/QCR6, UQCRB/QCR7, UQCRQ/QCR8, UQCR10/QCR9, UQCR11/QCR10 and a cleavage product of UQCRFS1). This cytochrome bc1 complex then forms a dimer. The cofactor is heme b.

It localises to the mitochondrion inner membrane. Component of the ubiquinol-cytochrome c reductase complex (complex III or cytochrome b-c1 complex) that is part of the mitochondrial respiratory chain. The b-c1 complex mediates electron transfer from ubiquinol to cytochrome c. Contributes to the generation of a proton gradient across the mitochondrial membrane that is then used for ATP synthesis. This Corynorhinus rafinesquii (Rafinesque's big-eared bat) protein is Cytochrome b (MT-CYB).